The following is a 130-amino-acid chain: MKEWLDEIKWNSDGLVPAIAQDHKTGRVLMMAWMNRESLALTAAEQRAIYWSRSRGKLWRKGEESGHVQKLHEMRLDCDADVIILMVEQLGHIACHTGRESCFYRVFEDGQWKTVDPVLKDPDAIYNAGH.

Aspartate 77 contacts Mg(2+). Position 78 (cysteine 78) interacts with Zn(2+). The Mg(2+) site is built by aspartate 79 and aspartate 81. Residues cysteine 95 and cysteine 102 each coordinate Zn(2+).

The protein belongs to the PRA-CH family. Homodimer. Requires Mg(2+) as cofactor. Zn(2+) is required as a cofactor.

It is found in the cytoplasm. The enzyme catalyses 1-(5-phospho-beta-D-ribosyl)-5'-AMP + H2O = 1-(5-phospho-beta-D-ribosyl)-5-[(5-phospho-beta-D-ribosylamino)methylideneamino]imidazole-4-carboxamide. The protein operates within amino-acid biosynthesis; L-histidine biosynthesis; L-histidine from 5-phospho-alpha-D-ribose 1-diphosphate: step 3/9. Catalyzes the hydrolysis of the adenine ring of phosphoribosyl-AMP. This is Phosphoribosyl-AMP cyclohydrolase from Pseudomonas putida (strain W619).